Consider the following 991-residue polypeptide: Envelope glycoprotein gp160 (991 aa).

Positions 1–106 are cleaved as a signal peptide; sequence MTSKESKPSR…CLMWEMRKGN (106 aa). The Extracellular portion of the chain corresponds to 107–840; that stretch reads QCQAEEVIAL…WSSWFSWLKY (734 aa). N-linked (GlcNAc...) asparagine; by host glycosylation is found at Asn-140, Asn-161, Asn-206, Asn-258, Asn-298, Asn-364, Asn-381, Asn-387, Asn-403, Asn-435, Asn-439, Asn-470, Asn-475, Asn-481, Asn-491, Asn-501, Asn-515, Asn-527, Asn-537, Asn-542, Asn-543, and Asn-568. Residues 665–685 form a fusion peptide region; sequence GIGLVIVLAIMAIIAAAGAGL. A coiled-coil region spans residues 697–747; the sequence is RTAVQSLANATAAQQEVLEASYAMVQHIAKGIRILEARVARVEALVDRMMV. Asn-705 is a glycosylation site (N-linked (GlcNAc...) asparagine; by host). Residues 731 to 747 are immunosuppression; that stretch reads LEARVARVEALVDRMMV. N-linked (GlcNAc...) asparagine; by host glycosylation is found at Asn-773, Asn-780, Asn-796, and Asn-830. Residues 788–823 are a coiled coil; it reads EEIEQHEGNLSLLLREAALQVHIAQRDARRIPDAWK. The helical transmembrane segment at 841 to 861 threads the bilayer; that stretch reads VPWIIMGIVGLICFRILMCVI. Over 862 to 991 the chain is Cytoplasmic; that stretch reads SMCLQAYKQV…PTLENDYVEL (130 aa). The S-palmitoyl cysteine; by host moiety is linked to residue Cys-864.

The mature envelope protein (Env) consists of a trimer of SU-TM heterodimers attached by noncovalent interactions or by a labile interchain disulfide bond. In terms of processing, specific enzymatic cleavages in vivo yield mature proteins. Envelope glycoproteins are synthesized as an inactive precursor that is N-glycosylated and processed likely by host cell furin or by a furin-like protease in the Golgi to yield the mature SU and TM proteins. The cleavage site between SU and TM requires the minimal sequence [KR]-X-[KR]-R. The transmembrane protein is palmitoylated.

It localises to the virion membrane. The protein localises to the host cell membrane. The surface protein (SU) attaches the virus to the host cell by binding to its receptor. This interaction triggers the refolding of the transmembrane protein (TM) and is thought to activate its fusogenic potential by unmasking its fusion peptide. Fusion occurs at the host cell plasma membrane. Functionally, the transmembrane protein (TM) acts as a class I viral fusion protein. Under the current model, the protein has at least 3 conformational states: pre-fusion native state, pre-hairpin intermediate state, and post-fusion hairpin state. During viral and target cell membrane fusion, the coiled coil regions (heptad repeats) assume a trimer-of-hairpins structure, positioning the fusion peptide in close proximity to the C-terminal region of the ectodomain. The formation of this structure appears to drive apposition and subsequent fusion of viral and target cell membranes. Membranes fusion leads to delivery of the nucleocapsid into the cytoplasm. The polypeptide is Envelope glycoprotein gp160 (env) (Ovis aries (Sheep)).